The primary structure comprises 286 residues: MKTRDMNRDWIATAETLSSALPYLQRYDDAIVVIKLGGHAMGSDEGMESFARDVVLLRQVGVNPVIVHGGGPMINALLDKLQIKSEFVNGKRVTDAATMEVVEMVLSGMVNKRIVQAINAQGGKGIGLSGKDANLITCEATDPALGFVGTPSEVNADMLKNLFEKEFIPVIAPIGSGTAGETFNINGDTAAGAVAAALKADRLLLLTDVAGVKNAEGVVVTELKAADVEEMTAAGVIAGGMIPKTETALAAVRGGVRACTIVDGRVPNAVLLELFTDHGAGSMIRS.

Residues 70 to 71 (GG), arginine 92, and asparagine 184 each bind substrate.

This sequence belongs to the acetylglutamate kinase family. ArgB subfamily.

It is found in the cytoplasm. The enzyme catalyses N-acetyl-L-glutamate + ATP = N-acetyl-L-glutamyl 5-phosphate + ADP. It participates in amino-acid biosynthesis; L-arginine biosynthesis; N(2)-acetyl-L-ornithine from L-glutamate: step 2/4. Functionally, catalyzes the ATP-dependent phosphorylation of N-acetyl-L-glutamate. The sequence is that of Acetylglutamate kinase from Ruegeria sp. (strain TM1040) (Silicibacter sp.).